We begin with the raw amino-acid sequence, 436 residues long: 3-ketoacyl-CoA thiolase (436 aa).

The active-site Acyl-thioester intermediate is Cys99. Residues His392 and Cys422 each act as proton acceptor in the active site.

This sequence belongs to the thiolase-like superfamily. Thiolase family. As to quaternary structure, heterotetramer of two alpha chains (FadJ) and two beta chains (FadI).

The protein localises to the cytoplasm. It catalyses the reaction an acyl-CoA + acetyl-CoA = a 3-oxoacyl-CoA + CoA. It functions in the pathway lipid metabolism; fatty acid beta-oxidation. Functionally, catalyzes the final step of fatty acid oxidation in which acetyl-CoA is released and the CoA ester of a fatty acid two carbons shorter is formed. In Shewanella sediminis (strain HAW-EB3), this protein is 3-ketoacyl-CoA thiolase.